The primary structure comprises 450 residues: Bifunctional protein GlmU (450 aa).

The tract at residues 1 to 226 (MLAVAVLAAG…PDEVNGINNR (226 aa)) is pyrophosphorylase. Residues 7 to 10 (LAAG), Lys21, Gln73, and 78 to 79 (GT) each bind UDP-N-acetyl-alpha-D-glucosamine. Asp103 contacts Mg(2+). Gly140, Glu155, Asn170, and Asn224 together coordinate UDP-N-acetyl-alpha-D-glucosamine. Mg(2+) is bound at residue Asn224. Residues 227–247 (KQLAQCEGVLQQRLRDYWMDE) form a linker region. The tract at residues 248-450 (GVTFVDPASC…TKDNWANRSI (203 aa)) is N-acetyltransferase. Residues Arg329 and Lys347 each coordinate UDP-N-acetyl-alpha-D-glucosamine. Residue His359 is the Proton acceptor of the active site. Positions 362 and 373 each coordinate UDP-N-acetyl-alpha-D-glucosamine. Acetyl-CoA contacts are provided by residues Ala376, 382–383 (NY), Ala419, and Arg436.

The protein in the N-terminal section; belongs to the N-acetylglucosamine-1-phosphate uridyltransferase family. In the C-terminal section; belongs to the transferase hexapeptide repeat family. As to quaternary structure, homotrimer. Mg(2+) serves as cofactor.

Its subcellular location is the cytoplasm. It catalyses the reaction alpha-D-glucosamine 1-phosphate + acetyl-CoA = N-acetyl-alpha-D-glucosamine 1-phosphate + CoA + H(+). The catalysed reaction is N-acetyl-alpha-D-glucosamine 1-phosphate + UTP + H(+) = UDP-N-acetyl-alpha-D-glucosamine + diphosphate. It functions in the pathway nucleotide-sugar biosynthesis; UDP-N-acetyl-alpha-D-glucosamine biosynthesis; N-acetyl-alpha-D-glucosamine 1-phosphate from alpha-D-glucosamine 6-phosphate (route II): step 2/2. Its pathway is nucleotide-sugar biosynthesis; UDP-N-acetyl-alpha-D-glucosamine biosynthesis; UDP-N-acetyl-alpha-D-glucosamine from N-acetyl-alpha-D-glucosamine 1-phosphate: step 1/1. It participates in bacterial outer membrane biogenesis; LPS lipid A biosynthesis. Functionally, catalyzes the last two sequential reactions in the de novo biosynthetic pathway for UDP-N-acetylglucosamine (UDP-GlcNAc). The C-terminal domain catalyzes the transfer of acetyl group from acetyl coenzyme A to glucosamine-1-phosphate (GlcN-1-P) to produce N-acetylglucosamine-1-phosphate (GlcNAc-1-P), which is converted into UDP-GlcNAc by the transfer of uridine 5-monophosphate (from uridine 5-triphosphate), a reaction catalyzed by the N-terminal domain. The protein is Bifunctional protein GlmU of Synechococcus sp. (strain CC9902).